A 72-amino-acid polypeptide reads, in one-letter code: Alpha-elapitoxin-Ast2b (72 aa).

Cystine bridges form between cysteine 3–cysteine 20, cysteine 13–cysteine 41, cysteine 26–cysteine 30, cysteine 45–cysteine 56, and cysteine 57–cysteine 62. Arginine 72 is modified (arginine amide).

This sequence belongs to the three-finger toxin family. Long-chain subfamily. Type II alpha-neurotoxin sub-subfamily. Expressed by the venom gland.

The protein localises to the secreted. In terms of biological role, binds with high affinity to muscular (alpha-1/CHRNA1) and neuronal (alpha-7/CHRNA7) nicotinic acetylcholine receptor (nAChR) and inhibits acetylcholine from binding to the receptor, thereby impairing neuromuscular and neuronal transmission. This Hydrophis stokesii (Stokes's sea snake) protein is Alpha-elapitoxin-Ast2b.